The sequence spans 188 residues: Dual specificity protein phosphatase 18 (188 aa).

The Tyrosine-protein phosphatase domain occupies 19–160 (GLSQITKSLY…LIHYEFQLFG (142 aa)). The Phosphocysteine intermediate role is filled by Cys-104.

It belongs to the protein-tyrosine phosphatase family. Non-receptor class dual specificity subfamily. Widely expressed with highest levels in liver, brain, ovary and testis.

The protein localises to the cytoplasm. It localises to the nucleus. The protein resides in the mitochondrion inner membrane. It catalyses the reaction O-phospho-L-tyrosyl-[protein] + H2O = L-tyrosyl-[protein] + phosphate. The catalysed reaction is O-phospho-L-seryl-[protein] + H2O = L-seryl-[protein] + phosphate. The enzyme catalyses O-phospho-L-threonyl-[protein] + H2O = L-threonyl-[protein] + phosphate. Activated by manganese ions, inhibited by iodoacetic acid. In terms of biological role, can dephosphorylate single and diphosphorylated synthetic MAPK peptides, with preference for the phosphotyrosine and diphosphorylated forms over phosphothreonine. In vitro, dephosphorylates p-nitrophenyl phosphate (pNPP). The polypeptide is Dual specificity protein phosphatase 18 (DUSP18) (Homo sapiens (Human)).